Consider the following 194-residue polypeptide: MSNIKLIVGLANPGAQYERTRHNAGAWYVEELARVCGATLTLDSKYFGMTARVTLHGKDVRLLIPTTFMNLSGKSVGALANFFRIAPEEILVAHDELDMPPGVAKFKLGGGHGGHNGLKDIIAKLANDKGFYRLRIGIGHPGDKSQVSNYVLSKASPTDQELMDAAVDEAVRSTEVLFNQDMAKAMHRLHSFKA.

Tyr17 provides a ligand contact to tRNA. His22 (proton acceptor) is an active-site residue. 3 residues coordinate tRNA: Phe68, Asn70, and Asn116.

It belongs to the PTH family. Monomer.

It is found in the cytoplasm. It carries out the reaction an N-acyl-L-alpha-aminoacyl-tRNA + H2O = an N-acyl-L-amino acid + a tRNA + H(+). Hydrolyzes ribosome-free peptidyl-tRNAs (with 1 or more amino acids incorporated), which drop off the ribosome during protein synthesis, or as a result of ribosome stalling. Its function is as follows. Catalyzes the release of premature peptidyl moieties from peptidyl-tRNA molecules trapped in stalled 50S ribosomal subunits, and thus maintains levels of free tRNAs and 50S ribosomes. In Shewanella halifaxensis (strain HAW-EB4), this protein is Peptidyl-tRNA hydrolase.